The following is a 193-amino-acid chain: MRLCDRDIEAWLDSGKLGIDPRPPVERINGATVDVRLGNKFRVFLGHTAGFIDLSGPKDEVSAALERVMSDEIILPEGEAFFLHPGELALAVTLESVTIPDDLVGWLDGRSSLARLGLMVHVTAHRIDPGWQGRIVLEFYNSGKLPLALRPGMLIGALSFEPLSGPAARPYNSRQDAKYRGQQGAVASRIDKD.

DCTP-binding positions include 110-115 (RSSLAR), Asp128, 136-138 (VLE), Tyr171, Lys178, and Gln182. Glu138 (proton donor/acceptor) is an active-site residue. Residues 170 to 193 (PYNSRQDAKYRGQQGAVASRIDKD) form a disordered region.

The protein belongs to the dCTP deaminase family. Homotrimer.

It carries out the reaction dCTP + H2O + H(+) = dUTP + NH4(+). It functions in the pathway pyrimidine metabolism; dUMP biosynthesis; dUMP from dCTP (dUTP route): step 1/2. Its function is as follows. Catalyzes the deamination of dCTP to dUTP. The protein is dCTP deaminase of Yersinia enterocolitica serotype O:8 / biotype 1B (strain NCTC 13174 / 8081).